A 634-amino-acid polypeptide reads, in one-letter code: Putative peptidoglycan O-acetyltransferase YrhL (634 aa).

Helical transmembrane passes span 10–30, 38–58, 79–99, 110–130, 145–165, 172–192, 244–264, 270–290, 307–327, 329–349, and 385–405; these read YIPG…TYHL, GFIG…SILL, RLLP…VLFD, AISS…LSYF, LAIE…GMYI, LAAV…VLYE, FLAF…EPFL, LFIS…SSFL, YGIY…QEIG, PVFW…ELSY, and MSIG…SGLA. Residues 413 to 481 form a disordered region; the sequence is KWTYSSQETN…SQQLKKPADT (69 aa). The span at 414 to 429 shows a compositional bias: polar residues; sequence WTYSSQETNADTSQAS. 2 stretches are compositionally biased toward basic and acidic residues: residues 430–447 and 455–470; these read GDKK…EQKT and KENK…KKDT.

It belongs to the acyltransferase 3 family.

It localises to the cell membrane. The chain is Putative peptidoglycan O-acetyltransferase YrhL (yrhL) from Bacillus subtilis (strain 168).